The primary structure comprises 519 residues: Sorting nexin-2 (519 aa).

Disordered regions lie at residues 1–20 (MAAE…DFEE) and 30–103 (STVS…VTPV). 2 stretches are compositionally biased toward low complexity: residues 30–44 (STVS…SPDP) and 93–103 (SSETSPAVTPV). Ser-97 is subject to Phosphoserine. Residues Thr-101 and Thr-104 each carry the phosphothreonine modification. Phosphoserine is present on residues Ser-117 and Ser-119. The PX domain occupies 140–269 (FDIEIGVSDP…QFLESSELPR (130 aa)). Arg-183, Ser-185, Lys-211, and Arg-235 together coordinate a 1,2-diacyl-sn-glycero-3-phospho-(1D-myo-inositol-3-phosphate). At Ser-185 the chain carries Phosphoserine. Positions 260 to 519 (QFLESSELPR…AFLPEAKAIA (260 aa)) are interaction with RhoG. Phosphoserine is present on Ser-277. Residues 278 to 295 (GAGILRMVNKAADAVNKM) form a membrane-binding amphipathic helix region. The BAR domain occupies 299-519 (MNESDAWFEE…AFLPEAKAIA (221 aa)). Lys-469 is modified (N6-acetyllysine).

Belongs to the sorting nexin family. As to quaternary structure, predominantly forms heterodimers with BAR domain-containing sorting nexins SNX5, SNX6 and SNX32; can self-associate to form homodimers. The heterodimers are proposed to self-assemble into helical arrays on the membrane to stabilize and expand local membrane curvature underlying endosomal tubule formation. Thought to be a component of the originally described retromer complex (also called SNX-BAR retromer) which is a pentamer containing the heterotrimeric retromer cargo-selective complex (CSC), also decribed as vacuolar protein sorting subcomplex (VPS) and a heterodimeric membrane-deforming subcomplex formed between SNX1 or SNX2 and SNX5 or SNX6 (also called SNX-BAR subcomplex); the respective CSC and SNX-BAR subcomplexes associate with low affinity. Interacts with SNX5, SNX6, SNX32, VPS26A, VPS29, VPS35, FNBP1, KALRN, RHOG (GDP-bound form).

It is found in the early endosome membrane. Its subcellular location is the cell projection. The protein localises to the lamellipodium. Involved in several stages of intracellular trafficking. Interacts with membranes containing phosphatidylinositol 3-phosphate (PtdIns(3P)) or phosphatidylinositol 3,5-bisphosphate (PtdIns(3,5)P2). Acts in part as component of the retromer membrane-deforming SNX-BAR subcomplex. The SNX-BAR retromer mediates retrograde transport of cargo proteins from endosomes to the trans-Golgi network (TGN) and is involved in endosome-to-plasma membrane transport for cargo protein recycling. The SNX-BAR subcomplex functions to deform the donor membrane into a tubular profile called endosome-to-TGN transport carrier (ETC). Can sense membrane curvature and has in vitro vesicle-to-membrane remodeling activity. Required for retrograde endosome-to-TGN transport of TGN38. Promotes KALRN- and RHOG-dependent but retromer-independent membrane remodeling such as lamellipodium formation; the function is dependent on GEF activity of KALRN. This chain is Sorting nexin-2 (SNX2), found in Bos taurus (Bovine).